The primary structure comprises 239 residues: Lysophospholipase-like protein 1 (239 aa).

N-acetylalanine is present on Ala-2. Active-site charge relay system residues include Ser-125, Asp-180, and His-212.

It belongs to the AB hydrolase superfamily. AB hydrolase 2 family.

It is found in the cytoplasm. Its subcellular location is the cytosol. It carries out the reaction S-hexadecanoyl-L-cysteinyl-[protein] + H2O = L-cysteinyl-[protein] + hexadecanoate + H(+). Palmitoyl thioesterase that catalyzes depalmitoylation of CGAS and KCNMA1. Acts as a regulator of innate immunity by mediating depalmitoylation of CGAS, thereby preventing CGAS homodimerization and cyclic GMP-AMP synthase activity. Does not exhibit phospholipase nor triacylglycerol lipase activity, able to hydrolyze only short chain substrates due to its shallow active site. This Mus musculus (Mouse) protein is Lysophospholipase-like protein 1.